Consider the following 484-residue polypeptide: Aspartyl/glutamyl-tRNA(Asn/Gln) amidotransferase subunit B (484 aa).

This sequence belongs to the GatB/GatE family. GatB subfamily. As to quaternary structure, heterotrimer of A, B and C subunits.

It catalyses the reaction L-glutamyl-tRNA(Gln) + L-glutamine + ATP + H2O = L-glutaminyl-tRNA(Gln) + L-glutamate + ADP + phosphate + H(+). It carries out the reaction L-aspartyl-tRNA(Asn) + L-glutamine + ATP + H2O = L-asparaginyl-tRNA(Asn) + L-glutamate + ADP + phosphate + 2 H(+). Functionally, allows the formation of correctly charged Asn-tRNA(Asn) or Gln-tRNA(Gln) through the transamidation of misacylated Asp-tRNA(Asn) or Glu-tRNA(Gln) in organisms which lack either or both of asparaginyl-tRNA or glutaminyl-tRNA synthetases. The reaction takes place in the presence of glutamine and ATP through an activated phospho-Asp-tRNA(Asn) or phospho-Glu-tRNA(Gln). The protein is Aspartyl/glutamyl-tRNA(Asn/Gln) amidotransferase subunit B of Bordetella pertussis (strain Tohama I / ATCC BAA-589 / NCTC 13251).